The primary structure comprises 401 residues: NADH-ubiquinone oxidoreductase 49 kDa subunit (401 aa).

This sequence belongs to the complex I 49 kDa subunit family.

The protein resides in the mitochondrion. The enzyme catalyses a ubiquinone + NADH + 5 H(+)(in) = a ubiquinol + NAD(+) + 4 H(+)(out). Functionally, core subunit of the mitochondrial membrane respiratory chain NADH dehydrogenase (Complex I) that is believed to belong to the minimal assembly required for catalysis. Complex I functions in the transfer of electrons from NADH to the respiratory chain. The immediate electron acceptor for the enzyme is believed to be ubiquinone. Component of the iron-sulfur (IP) fragment of the enzyme. This is NADH-ubiquinone oxidoreductase 49 kDa subunit (NAD7) from Acanthamoeba castellanii (Amoeba).